The sequence spans 231 residues: Ribose-5-phosphate isomerase A (231 aa).

Residues 31–34, 86–89, and 100–103 each bind substrate; these read TGST, DGAD, and KGLG. Glutamate 109 (proton acceptor) is an active-site residue. Lysine 127 provides a ligand contact to substrate.

Belongs to the ribose 5-phosphate isomerase family. Homodimer.

The catalysed reaction is aldehydo-D-ribose 5-phosphate = D-ribulose 5-phosphate. It participates in carbohydrate degradation; pentose phosphate pathway; D-ribose 5-phosphate from D-ribulose 5-phosphate (non-oxidative stage): step 1/1. In terms of biological role, catalyzes the reversible conversion of ribose-5-phosphate to ribulose 5-phosphate. The sequence is that of Ribose-5-phosphate isomerase A from Gluconobacter oxydans (strain 621H) (Gluconobacter suboxydans).